The sequence spans 118 residues: Small ribosomal subunit protein uS13 (118 aa).

The tract at residues 94-118 is disordered; the sequence is GLPVRGQRTKTNARTRKGPCKPIKK.

The protein belongs to the universal ribosomal protein uS13 family. Part of the 30S ribosomal subunit. Forms a loose heterodimer with protein S19. Forms two bridges to the 50S subunit in the 70S ribosome.

Located at the top of the head of the 30S subunit, it contacts several helices of the 16S rRNA. In the 70S ribosome it contacts the 23S rRNA (bridge B1a) and protein L5 of the 50S subunit (bridge B1b), connecting the 2 subunits; these bridges are implicated in subunit movement. Contacts the tRNAs in the A and P-sites. In Salmonella typhi, this protein is Small ribosomal subunit protein uS13.